Here is a 343-residue protein sequence, read N- to C-terminus: Glucokinase (343 aa).

18-23 (GDIGGT) is an ATP binding site.

The protein belongs to the bacterial glucokinase family.

The protein resides in the cytoplasm. It catalyses the reaction D-glucose + ATP = D-glucose 6-phosphate + ADP + H(+). This is Glucokinase from Brucella melitensis biotype 1 (strain ATCC 23456 / CCUG 17765 / NCTC 10094 / 16M).